The sequence spans 214 residues: Urease accessory protein UreG (214 aa).

23-30 is a binding site for GTP; that stretch reads GPVGSGKT.

Belongs to the SIMIBI class G3E GTPase family. UreG subfamily. In terms of assembly, homodimer. UreD, UreF and UreG form a complex that acts as a GTP-hydrolysis-dependent molecular chaperone, activating the urease apoprotein by helping to assemble the nickel containing metallocenter of UreC. The UreE protein probably delivers the nickel.

The protein resides in the cytoplasm. Facilitates the functional incorporation of the urease nickel metallocenter. This process requires GTP hydrolysis, probably effectuated by UreG. The chain is Urease accessory protein UreG from Bordetella bronchiseptica (strain ATCC BAA-588 / NCTC 13252 / RB50) (Alcaligenes bronchisepticus).